Consider the following 167-residue polypeptide: Protein tyrosine phosphatase type IVA 2 (167 aa).

The 154-residue stretch at 5 to 158 (APVEISYENM…YRPKMRLRFR (154 aa)) folds into the Tyrosine-protein phosphatase domain. Cys46 and Cys101 are joined by a disulfide. Asp69 (proton donor) is an active-site residue. Catalysis depends on Cys101, which acts as the Phosphocysteine intermediate. 102–107 (VAGLGR) serves as a coordination point for phosphate. Residue Arg107 participates in substrate binding. Position 164 is a cysteine methyl ester (Cys164). Cys164 carries the S-farnesyl cysteine lipid modification. A propeptide spans 165–167 (CVQ) (removed in mature form).

The protein belongs to the protein-tyrosine phosphatase family. In contrast to PTP4A1 and PTP4A3, does not interact with tubulin. Interacts with RABGGTB. Farnesylated. Farnesylation is required for membrane targeting and for interaction with RABGGTB. In terms of tissue distribution, expressed in skeletal muscle, and at lower levels in liver, lung, heart, kidney, brain, testis and spleen.

The protein resides in the cell membrane. It localises to the early endosome. Its subcellular location is the cytoplasm. The enzyme catalyses O-phospho-L-tyrosyl-[protein] + H2O = L-tyrosyl-[protein] + phosphate. With respect to regulation, inhibited by sodium orthovanadate and pentamidine. In terms of biological role, protein tyrosine phosphatase which stimulates progression from G1 into S phase during mitosis. Inhibits geranylgeranyl transferase type II activity by blocking the association between RABGGTA and RABGGTB. This chain is Protein tyrosine phosphatase type IVA 2 (Ptp4a2), found in Mus musculus (Mouse).